We begin with the raw amino-acid sequence, 268 residues long: Shikimate dehydrogenase (NADP(+)) (268 aa).

Residues 13-15 and Thr-60 contribute to the shikimate site; that span reads SLS. Lys-64 functions as the Proton acceptor in the catalytic mechanism. Position 76 (Glu-76) interacts with NADP(+). Positions 85 and 100 each coordinate shikimate. NADP(+)-binding positions include 124–128, 148–153, and Ile-209; these read GAGGA and NRTMAR. Tyr-211 is a binding site for shikimate. Position 232 (Gly-232) interacts with NADP(+).

It belongs to the shikimate dehydrogenase family. In terms of assembly, homodimer.

The enzyme catalyses shikimate + NADP(+) = 3-dehydroshikimate + NADPH + H(+). Its pathway is metabolic intermediate biosynthesis; chorismate biosynthesis; chorismate from D-erythrose 4-phosphate and phosphoenolpyruvate: step 4/7. Functionally, involved in the biosynthesis of the chorismate, which leads to the biosynthesis of aromatic amino acids. Catalyzes the reversible NADPH linked reduction of 3-dehydroshikimate (DHSA) to yield shikimate (SA). The protein is Shikimate dehydrogenase (NADP(+)) of Staphylococcus aureus (strain MSSA476).